Consider the following 237-residue polypeptide: Germination-specific N-acetylmuramoyl-L-alanine amidase (237 aa).

An N-terminal signal peptide occupies residues 1–27 (MRKKLKWLSFLLGFIILLFLFKYQFSN). The MurNAc-LAA domain occupies 43–226 (IYLDPGHGGP…VASSIYKGIL (184 aa)).

It belongs to the N-acetylmuramoyl-L-alanine amidase 3 family.

It is found in the secreted. It carries out the reaction Hydrolyzes the link between N-acetylmuramoyl residues and L-amino acid residues in certain cell-wall glycopeptides.. In terms of biological role, cleaves the peptide side chain from the N-acetylmuramic acid residues in peptidoglycan. This is a step in the formation of muramic delta-lactam residues in spore cortex. The sequence is that of Germination-specific N-acetylmuramoyl-L-alanine amidase (cwlD) from Bacillus subtilis (strain 168).